A 693-amino-acid chain; its full sequence is Elongation factor G (693 aa).

Residues 8–282 form the tr-type G domain; sequence EKTRNIGIMA…AVLDYLPSPL (275 aa). Residues 17-24, 81-85, and 135-138 each bind GTP; these read AHVDAGKT, DTPGH, and NKMD.

Belongs to the TRAFAC class translation factor GTPase superfamily. Classic translation factor GTPase family. EF-G/EF-2 subfamily.

It localises to the cytoplasm. Functionally, catalyzes the GTP-dependent ribosomal translocation step during translation elongation. During this step, the ribosome changes from the pre-translocational (PRE) to the post-translocational (POST) state as the newly formed A-site-bound peptidyl-tRNA and P-site-bound deacylated tRNA move to the P and E sites, respectively. Catalyzes the coordinated movement of the two tRNA molecules, the mRNA and conformational changes in the ribosome. The protein is Elongation factor G of Enterococcus faecalis (strain ATCC 700802 / V583).